Reading from the N-terminus, the 288-residue chain is Protein sprouty homolog 3 (288 aa).

The SPR domain occupies 154 to 267 (KCVPCTAVRP…PGCRCKRHTN (114 aa)).

Belongs to the sprouty family. Interacts with TESK1. Interacts with USP11. Interacts with CAV1 (via C-terminus). Expressed in the brain with expression the highest in Purkinje cell bodies and projections in the cerebellum (at protein level). Also expressed in central and peripheral nervous system ganglion cells, superior cervical ganglion and dorsal root ganglion (at protein level). Expressed in the retinal ganglion cell layer and the inner nuclear layer (at protein level).

The protein localises to the cytoplasm. Functionally, inhibits neurite branching, arbor length and neurite complexity. Inhibits EGF-mediated p42/44 ERK signaling. Negatively regulates the MAPK cascade, resulting in a reduction of extracellular matrix protein accumulation. May function as an antagonist of fibroblast growth factor (FGF) pathways and may negatively modulate respiratory organogenesis. The protein is Protein sprouty homolog 3 of Mus musculus (Mouse).